Consider the following 413-residue polypeptide: Multifunctional CCA protein (413 aa).

ATP contacts are provided by glycine 8 and arginine 11. Glycine 8 and arginine 11 together coordinate CTP. The Mg(2+) site is built by aspartate 21 and aspartate 23. ATP contacts are provided by arginine 91, arginine 143, and arginine 146. Arginine 91, arginine 143, and arginine 146 together coordinate CTP. Residues 232–333 (TGVHVMMVVD…VRFFERSDAL (102 aa)) form the HD domain.

It belongs to the tRNA nucleotidyltransferase/poly(A) polymerase family. Bacterial CCA-adding enzyme type 1 subfamily. Monomer. Can also form homodimers and oligomers. Requires Mg(2+) as cofactor. The cofactor is Ni(2+).

It catalyses the reaction a tRNA precursor + 2 CTP + ATP = a tRNA with a 3' CCA end + 3 diphosphate. The enzyme catalyses a tRNA with a 3' CCA end + 2 CTP + ATP = a tRNA with a 3' CCACCA end + 3 diphosphate. Its function is as follows. Catalyzes the addition and repair of the essential 3'-terminal CCA sequence in tRNAs without using a nucleic acid template. Adds these three nucleotides in the order of C, C, and A to the tRNA nucleotide-73, using CTP and ATP as substrates and producing inorganic pyrophosphate. tRNA 3'-terminal CCA addition is required both for tRNA processing and repair. Also involved in tRNA surveillance by mediating tandem CCA addition to generate a CCACCA at the 3' terminus of unstable tRNAs. While stable tRNAs receive only 3'-terminal CCA, unstable tRNAs are marked with CCACCA and rapidly degraded. The polypeptide is Multifunctional CCA protein (Burkholderia ambifaria (strain MC40-6)).